Consider the following 334-residue polypeptide: MPSKESWSGRKTNRATVHKSKQEGRQQDLLIAALGMKLGSQKSSVTIWQPLKLFAYSQLTSLVRRATLKENEQIPKYEKVHNFKVHTFRGPHWCEYCANFMWGLIAQGVKCADCGLNVHKQCSKMVPNDCKPDLKHVKKVYSCDLTTLVKARTTKRPMVVDMCIREIEARGLNSEGLYRVSGFSDLIEDVKMAFDRDGEKADISVNMYEDINIITGALKLYFRDLPIPLITYDAYPKFIESAKIMDPDEQLETLHEALKLLPPAHCETLRYLMAHLKRVTLHEKENLMNAENLGIVFGPTLMRSPELDAMAALNDIRYQRLVVELLIKNEDILF.

Residues 1-10 (MPSKESWSGR) are compositionally biased toward polar residues. Positions 1 to 22 (MPSKESWSGRKTNRATVHKSKQ) are disordered. A Phosphothreonine modification is found at Thr-67. The segment at 80–130 (VHNFKVHTFRGPHWCEYCANFMWGLIAQGVKCADCGLNVHKQCSKMVPNDC) adopts a Phorbol-ester/DAG-type zinc-finger fold. Residues 143 to 334 (CDLTTLVKAR…LLIKNEDILF (192 aa)) enclose the Rho-GAP domain. At Thr-215 the chain carries Phosphothreonine.

Interacts with EPHA4; effector of EPHA4 in axon guidance linking EPHA4 activation to RAC1 regulation. Post-translationally, phosphorylated. Phosphorylation is EPHA4 kinase activity-dependent.

Functionally, GTPase-activating protein for p21-rac and a phorbol ester receptor. Involved in the assembly of neuronal locomotor circuits as a direct effector of EPHA4 in axon guidance. The protein is N-chimaerin (CHN1) of Bos taurus (Bovine).